The chain runs to 686 residues: tRNA (guanine(37)-N(1))-methyltransferase (686 aa).

The interval 206–244 is disordered; sequence GGPSSVSLTEDTDGSEQPQGLPRAAAAPPPPSNKRRASY. Residues histidine 428, 466–467, 495–496, and asparagine 530 contribute to the S-adenosyl-L-methionine site; these read DL and DG.

This sequence belongs to the class I-like SAM-binding methyltransferase superfamily. TRM5/TYW2 family. In terms of assembly, monomer.

It is found in the mitochondrion matrix. The protein resides in the nucleus. The protein localises to the cytoplasm. The catalysed reaction is guanosine(37) in tRNA + S-adenosyl-L-methionine = N(1)-methylguanosine(37) in tRNA + S-adenosyl-L-homocysteine + H(+). In terms of biological role, specifically methylates the N1 position of guanosine-37 in various cytoplasmic and mitochondrial tRNAs. Methylation is not dependent on the nature of the nucleoside 5' of the target nucleoside. This is the first step in the biosynthesis of wybutosine (yW), a modified base adjacent to the anticodon of tRNAs and required for accurate decoding. The sequence is that of tRNA (guanine(37)-N(1))-methyltransferase from Leishmania major.